The chain runs to 521 residues: Acetylcholine receptor subunit beta-like 1 (521 aa).

The signal sequence occupies residues 1–24 (MESSCKSWLLCSILVLVAFSLVSA). At 25-235 (SEDEERLVRD…ITFYIIIRRK (211 aa)) the chain is on the extracellular side. Asparagine 48 is a glycosylation site (N-linked (GlcNAc...) asparagine). Cysteines 152 and 166 form a disulfide. The next 3 helical transmembrane spans lie at 236–260 (TLFY…VFYL), 268–286 (VTLG…LLVS), and 302–323 (YLLF…IINW). Residues 324-481 (NFRGPRTHRM…WKYVAMVIDR (158 aa)) are Cytoplasmic-facing. A helical membrane pass occupies residues 482-500 (LQLYIFFIVTTAGTVGILM).

It belongs to the ligand-gated ion channel (TC 1.A.9) family. Acetylcholine receptor (TC 1.A.9.1) subfamily. As to expression, CNS in embryos.

It localises to the postsynaptic cell membrane. The protein resides in the cell membrane. In terms of biological role, after binding acetylcholine, the AChR responds by an extensive change in conformation that affects all subunits and leads to opening of an ion-conducting channel across the plasma membrane. This is Acetylcholine receptor subunit beta-like 1 (nAChRbeta1) from Drosophila melanogaster (Fruit fly).